Here is a 475-residue protein sequence, read N- to C-terminus: FAD-dependent monooxygenase sdgC (475 aa).

The first 23 residues, 1–23 (MDKRSFKVIVVGGSIAGLTLAHS), serve as a signal peptide directing secretion. Positions 35, 49, and 126 each coordinate FAD. An N-linked (GlcNAc...) asparagine glycan is attached at Asn236. Ala330 provides a ligand contact to FAD. A helical transmembrane segment spans residues 446 to 466 (ISGVLLLVIPIIALVYGYSVI).

The protein belongs to the paxM FAD-dependent monooxygenase family. FAD serves as cofactor.

It localises to the membrane. Its pathway is secondary metabolite biosynthesis. Functionally, FAD-dependent monooxygenase; part of the gene cluster that mediates the biosynthesis of the polyenes aspernidgulenes. The carbon backbone of aspernidgulenes is synthesized by the HR-PKS sdgA, which accepts acetyl-CoA as the starter unit and performs malonyl-CoA extensions as well as regioselective methylation and reduction. The resulting nonaketide offloads the HR-PKS by intramolecular lactonization to yield the 5,6-dihydro-alpha-pyrone-containing hexaenoic acids preaspernidgulene A1 and A2. The FAD-dependent monooxygenase sdgC then installs the first epoxide on the penultimate double bond. Subsequently, the FAD-dependent monooxygenase sdgF presumably generates a ketone intermediate through Meinwald rearrangement involving a hydride shift. Next, sdgC introduces another epoxide on the last olefin of the ketone intermediate after E/Z isomerization. The epoxide hydrolase sdgD then catalyzes stereospecific cyclization of the 5,6-dihydro-alpha-pyrone and opening of the epoxide ring to form an oxygenated trimethylcyclopentanone and an oxabicyclo[2.2.1]heptane unit. Finally, the bicyclic unit undergoes hydrolytic cleavage, either spontaneously or catalyzed by sdgD, to assemble the dimethyl-gamma-lactone moiety in aspernidgulene A1. In Emericella nidulans (strain FGSC A4 / ATCC 38163 / CBS 112.46 / NRRL 194 / M139) (Aspergillus nidulans), this protein is FAD-dependent monooxygenase sdgC.